The sequence spans 398 residues: Lysophosphatidylserine lipase ABHD12 (398 aa).

Basic and acidic residues predominate over residues 1–15 (MRKRTEPVTLEHERC). A disordered region spans residues 1–24 (MRKRTEPVTLEHERCAASGSSSSG). The Cytoplasmic segment spans residues 1-74 (MRKRTEPVTL…RKSLWFRLRK (74 aa)). Residues 75 to 95 (ILLCVLGFYIAIPFLVKLCPG) form a helical membrane-spanning segment. Over 96 to 398 (IQAKLIFLNF…LGKSEPERQH (303 aa)) the chain is Extracellular. Asn-123 is a glycosylation site (N-linked (GlcNAc...) asparagine). Ser-246 acts as the Nucleophile in catalysis. Residues Asp-333 and His-372 each act as charge relay system in the active site.

This sequence belongs to the serine esterase family.

It is found in the endoplasmic reticulum membrane. The enzyme catalyses 1-(9Z-octadecenoyl)-sn-glycero-3-phospho-L-serine + H2O = sn-glycero-3-phospho-L-serine + (9Z)-octadecenoate + H(+). It catalyses the reaction 1-(9Z-octadecenoyl)-sn-glycero-3-phospho-(1'-sn-glycerol) + H2O = sn-glycero-3-phospho-(1'-sn-glycerol) + (9Z)-octadecenoate + H(+). It carries out the reaction 1-(9Z-octadecenoyl)-sn-glycero-3-phospho-(1D-myo-inositol) + H2O = sn-glycero-3-phospho-1D-myo-inositol + (9Z)-octadecenoate + H(+). The catalysed reaction is 1-(9Z-octadecenoyl)-sn-glycero-3-phosphoethanolamine + H2O = sn-glycero-3-phosphoethanolamine + (9Z)-octadecenoate + H(+). The enzyme catalyses 1-(9Z-octadecenoyl)-sn-glycero-3-phosphocholine + H2O = 1-(9Z-octadecenoyl)-sn-glycerol + phosphocholine + H(+). It catalyses the reaction 2-(9Z-octadecenoyl)-glycerol + H2O = glycerol + (9Z)-octadecenoate + H(+). It carries out the reaction 1-hexadecanoyl-sn-glycero-3-phospho-L-serine + H2O = sn-glycero-3-phospho-L-serine + hexadecanoate + H(+). The catalysed reaction is 2-(5Z,8Z,11Z,14Z-eicosatetraenoyl)-glycerol + H2O = glycerol + (5Z,8Z,11Z,14Z)-eicosatetraenoate + H(+). The enzyme catalyses Hydrolyzes glycerol monoesters of long-chain fatty acids.. It catalyses the reaction 1-decanoylglycerol + H2O = decanoate + glycerol + H(+). It carries out the reaction 1-dodecanoylglycerol + H2O = dodecanoate + glycerol + H(+). The catalysed reaction is 1-tetradecanoylglycerol + H2O = tetradecanoate + glycerol + H(+). The enzyme catalyses 2-hexadecanoylglycerol + H2O = glycerol + hexadecanoate + H(+). It catalyses the reaction 1-(9Z-octadecenoyl)-glycerol + H2O = glycerol + (9Z)-octadecenoate + H(+). It carries out the reaction 2-(9Z,12Z-octadecadienoyl)-glycerol + H2O = (9Z,12Z)-octadecadienoate + glycerol + H(+). The catalysed reaction is 1-(5Z,8Z,11Z,14Z-eicosatetraenoyl)-glycerol + H2O = glycerol + (5Z,8Z,11Z,14Z)-eicosatetraenoate + H(+). The enzyme catalyses 1-(9Z,12Z-octadecadienoyl)-glycerol + H2O = (9Z,12Z)-octadecadienoate + glycerol + H(+). It catalyses the reaction 1-hexadecanoylglycerol + H2O = glycerol + hexadecanoate + H(+). It carries out the reaction 1-octadecanoylglycerol + H2O = octadecanoate + glycerol + H(+). The catalysed reaction is 1-octadecanoyl-2-(9,10-epoxyoctadecanoyl)-sn-glycero-3-phospho-L-serine + H2O = 9,10-epoxyoctadecanoate + 1-octadecanoyl-sn-glycero-3-phosphoserine + H(+). The enzyme catalyses 1-octadecanoyl-2-(10-hydroxyoctadecanoyl)-sn-glycero-3-phospho-L-serine + H2O = 1-octadecanoyl-sn-glycero-3-phosphoserine + 10-hydroxyoctadecanoate + H(+). It catalyses the reaction 1-hexadecanoyl-2-(10-hydroxyoctadecanoyl)-sn-glycero-3-phospho-L-serine + H2O = 10-hydroxyoctadecanoate + 1-hexadecanoyl-sn-glycero-3-phospho-L-serine + H(+). In terms of biological role, lysophosphatidylserine (LPS) lipase that mediates the hydrolysis of lysophosphatidylserine, a class of signaling lipids that regulates immunological and neurological processes. Represents a major lysophosphatidylserine lipase in the brain, thereby playing a key role in the central nervous system. Also able to hydrolyze oxidized phosphatidylserine; oxidized phosphatidylserine is produced in response to severe inflammatory stress and constitutes a proapoptotic 'eat me' signal. Also has monoacylglycerol (MAG) lipase activity: hydrolyzes 2-arachidonoylglycerol (2-AG), thereby acting as a regulator of endocannabinoid signaling pathways. Has a strong preference for very-long-chain lipid substrates; substrate specificity is likely due to improved catalysis and not improved substrate binding. The protein is Lysophosphatidylserine lipase ABHD12 of Rattus norvegicus (Rat).